Consider the following 253-residue polypeptide: Tryptophan synthase alpha chain (253 aa).

Catalysis depends on proton acceptor residues glutamate 47 and aspartate 58.

Belongs to the TrpA family. As to quaternary structure, tetramer of two alpha and two beta chains.

It carries out the reaction (1S,2R)-1-C-(indol-3-yl)glycerol 3-phosphate + L-serine = D-glyceraldehyde 3-phosphate + L-tryptophan + H2O. The protein operates within amino-acid biosynthesis; L-tryptophan biosynthesis; L-tryptophan from chorismate: step 5/5. Its function is as follows. The alpha subunit is responsible for the aldol cleavage of indoleglycerol phosphate to indole and glyceraldehyde 3-phosphate. In Syntrophotalea carbinolica (strain DSM 2380 / NBRC 103641 / GraBd1) (Pelobacter carbinolicus), this protein is Tryptophan synthase alpha chain.